The primary structure comprises 409 residues: Translation initiation factor 2 subunit gamma (409 aa).

The 198-residue stretch at 6–203 folds into the tr-type G domain; that stretch reads QPEVNIGLVG…AVQSEIPTPE (198 aa). Residues 15-22 are G1; it reads GHVDHGKT. Mg(2+) is bound by residues Asp-18, Thr-22, Gly-43, and Ser-45. 18–23 is a binding site for GTP; the sequence is DHGKTT. The tract at residues 43–47 is G2; that stretch reads GISIR. Positions 90–93 are G3; that stretch reads DAPG. GTP is bound by residues 146–149 and 181–183; these read NKVD and SAG. The tract at residues 146-149 is G4; the sequence is NKVD. The interval 181 to 183 is G5; it reads SAG.

It belongs to the TRAFAC class translation factor GTPase superfamily. Classic translation factor GTPase family. EIF2G subfamily. Heterotrimer composed of an alpha, a beta and a gamma chain. The cofactor is Mg(2+).

It catalyses the reaction GTP + H2O = GDP + phosphate + H(+). EIF-2 functions in the early steps of protein synthesis by forming a ternary complex with GTP and initiator tRNA. This chain is Translation initiation factor 2 subunit gamma, found in Haloarcula marismortui (strain ATCC 43049 / DSM 3752 / JCM 8966 / VKM B-1809) (Halobacterium marismortui).